Reading from the N-terminus, the 346-residue chain is 3',5'-cyclic-nucleotide phosphodiesterase (346 aa).

This sequence belongs to the cyclic nucleotide phosphodiesterase class-II family.

It catalyses the reaction a nucleoside 3',5'-cyclic phosphate + H2O = a nucleoside 5'-phosphate + H(+). This chain is 3',5'-cyclic-nucleotide phosphodiesterase (cgs2), found in Schizosaccharomyces pombe (strain 972 / ATCC 24843) (Fission yeast).